A 346-amino-acid chain; its full sequence is Phenylalanine--tRNA ligase alpha subunit (346 aa).

Glu-261 is a binding site for Mg(2+).

This sequence belongs to the class-II aminoacyl-tRNA synthetase family. Phe-tRNA synthetase alpha subunit type 1 subfamily. As to quaternary structure, tetramer of two alpha and two beta subunits. It depends on Mg(2+) as a cofactor.

The protein resides in the cytoplasm. It catalyses the reaction tRNA(Phe) + L-phenylalanine + ATP = L-phenylalanyl-tRNA(Phe) + AMP + diphosphate + H(+). The sequence is that of Phenylalanine--tRNA ligase alpha subunit from Dehalococcoides mccartyi (strain ATCC BAA-2100 / JCM 16839 / KCTC 5957 / BAV1).